The chain runs to 298 residues: MDIVLYFVAVPILIVLIVSAVKVRGKTEEDNHEARQEVAAQVVGRLQAEEGSNRLRRRRNLNRMMANRMANSAYREAADNDSPVEVEEEYEEAEQQSQATGKRGAKKQKKLEEKQAKRAQREAELEEREERKRTQELREEERRKEDKKERILEQRQEEEELRAKEEQEKREEEEYLCLKQSFVVEEQGEADELTEQESQNLLQEFIQHIKDCKVVLLEDLASHFGLRTQDAISRLQDLLSDGSITGVIDDRGKFIFITPEEMNVVAQFIRQRGRVSITDLAQASNSLINLIPEIHNTA.

Residues 1 to 21 (MDIVLYFVAVPILIVLIVSAV) form a helical membrane-spanning segment. At 22 to 298 (KVRGKTEEDN…NLIPEIHNTA (277 aa)) the chain is on the cytoplasmic side. Residues 71-149 (NSAYREAADN…EERRKEDKKE (79 aa)) are disordered. Residues 82-94 (SPVEVEEEYEEAE) are compositionally biased toward acidic residues. Positions 110-149 (KLEEKQAKRAQREAELEEREERKRTQELREEERRKEDKKE) are enriched in basic and acidic residues. The short motif at 181-195 (SFVVEEQGEADELTE) is the UFM1-interacting motif (UFIM) element. The PCI domain maps to 215-259 (VLLEDLASHFGLRTQDAISRLQDLLSDGSITGVIDDRGKFIFITP).

It belongs to the DDRGK1 family. As to quaternary structure, component of the UFM1 ribosome E3 ligase (UREL) complex, composed of ufl1, ddrgk1 and cdk5rap3.

It is found in the endoplasmic reticulum membrane. Functionally, component of the UFM1 ribosome E3 ligase (UREL) complex, a multiprotein complex that catalyzes ufmylation of endoplasmic reticulum-docked proteins. The UREL complex plays a key role in ribosome recycling by mediating mono-ufmylation of the RPL26/uL24 subunit of the 60S ribosome following ribosome dissociation: ufmylation weakens the junction between post-termination 60S subunits and SEC61 translocons, promoting release and recycling of the large ribosomal subunit from the endoplasmic reticulum membrane. Ufmylation of RPL26/uL24 and subsequent 60S ribosome recycling either take place after normal termination of translation or after ribosome stalling during cotranslational translocation at the endoplasmic reticulum. Within the UREL complex, DDRGK1 tethers the complex to the endoplasmic reticulum membrane to restrict its activity to endoplasmic reticulum-docked ribosomes and acts as an ufmylation 'reader': following RPL26/uL24 ufmylation, DDRGK1 specifically binds to ufmylated RPL26/uL24 via its UFIM motif, resulting in stable association between the 60S ribosome and the UREL complex, followed by dissociation of the 60S ribosome subunit from the endoplasmic reticulum membrane. The UREL complex is also involved in reticulophagy in response to endoplasmic reticulum stress by promoting ufmylation of proteins such as CYB5R3 and RPN1, thereby promoting lysosomal degradation of ufmylated proteins. Required for stabilization and ufmylation of ATG9A. The polypeptide is DDRGK domain-containing protein 1 (Osmerus mordax (Rainbow smelt)).